Here is a 226-residue protein sequence, read N- to C-terminus: Insulin-like growth factor-binding protein 6 (226 aa).

The first 25 residues, 1-25 (MTWDGLPTQPLLMLLMLLFAAGSES), serve as a signal peptide directing secretion. Positions 26 to 99 (ALAGCPGCGP…LIGQGRCQRA (74 aa)) constitute an IGFBP N-terminal domain. Cystine bridges form between Cys30–Cys33, Cys49–Cys55, Cys63–Cys76, and Cys70–Cys96. Residues 92 to 148 (GQGRCQRARGPSEETTKESKPHGGASRPRDRDRQKNPRTSAAPIRPSPVQDGEMGPC) form a disordered region. Residues 101 to 126 (GPSEETTKESKPHGGASRPRDRDRQK) are compositionally biased toward basic and acidic residues. Residues 145–220 (MGPCRRHLDS…SPDGQGSSQC (76 aa)) enclose the Thyroglobulin type-1 domain. 3 disulfides stabilise this stretch: Cys148-Cys176, Cys187-Cys198, and Cys200-Cys220. Residues 205-226 (GQPLPVSPDGQGSSQCSARSSG) form a disordered region. The span at 214–226 (GQGSSQCSARSSG) shows a compositional bias: polar residues.

As to quaternary structure, interacts (via C-terminal domain) with PHB2. Post-translationally, O-glycosylated.

It is found in the secreted. Functionally, IGF-binding proteins prolong the half-life of the IGFs and have been shown to either inhibit or stimulate the growth promoting effects of the IGFs on cell culture. They alter the interaction of IGFs with their cell surface receptors. Activates the MAPK signaling pathway and induces cell migration. This Rattus norvegicus (Rat) protein is Insulin-like growth factor-binding protein 6 (Igfbp6).